Here is a 274-residue protein sequence, read N- to C-terminus: Bis(5'-nucleosyl)-tetraphosphatase, symmetrical (274 aa).

This sequence belongs to the Ap4A hydrolase family.

The catalysed reaction is P(1),P(4)-bis(5'-adenosyl) tetraphosphate + H2O = 2 ADP + 2 H(+). Its function is as follows. Hydrolyzes diadenosine 5',5'''-P1,P4-tetraphosphate to yield ADP. In Shewanella oneidensis (strain ATCC 700550 / JCM 31522 / CIP 106686 / LMG 19005 / NCIMB 14063 / MR-1), this protein is Bis(5'-nucleosyl)-tetraphosphatase, symmetrical.